A 762-amino-acid chain; its full sequence is 5-methyltetrahydropteroyltriglutamate--homocysteine methyltransferase (762 aa).

5-methyltetrahydropteroyltri-L-glutamate is bound by residues 17 to 20 (REWK) and K111. Residues 435-437 (IGS) and E488 contribute to the L-homocysteine site. Residues 435–437 (IGS) and E488 contribute to the L-methionine site. Residues 519-520 (RC) and W565 each bind 5-methyltetrahydropteroyltri-L-glutamate. D603 lines the L-homocysteine pocket. D603 is an L-methionine binding site. E609 lines the 5-methyltetrahydropteroyltri-L-glutamate pocket. Zn(2+)-binding residues include H645, C647, and E669. H698 acts as the Proton donor in catalysis. Zn(2+) is bound at residue C730.

Belongs to the vitamin-B12 independent methionine synthase family. The cofactor is Zn(2+).

The enzyme catalyses 5-methyltetrahydropteroyltri-L-glutamate + L-homocysteine = tetrahydropteroyltri-L-glutamate + L-methionine. It participates in amino-acid biosynthesis; L-methionine biosynthesis via de novo pathway; L-methionine from L-homocysteine (MetE route): step 1/1. Its function is as follows. Catalyzes the transfer of a methyl group from 5-methyltetrahydrofolate to homocysteine resulting in methionine formation. The protein is 5-methyltetrahydropteroyltriglutamate--homocysteine methyltransferase of Bacillus thuringiensis (strain Al Hakam).